The following is a 264-amino-acid chain: Diphthine synthase (264 aa).

S-adenosyl-L-methionine contacts are provided by residues leucine 10, aspartate 87, valine 90, 115-116 (SI), leucine 166, alanine 209, and histidine 234.

Belongs to the diphthine synthase family. Homodimer.

The enzyme catalyses 2-[(3S)-amino-3-carboxypropyl]-L-histidyl-[translation elongation factor 2] + 3 S-adenosyl-L-methionine = diphthine-[translation elongation factor 2] + 3 S-adenosyl-L-homocysteine + 3 H(+). Its pathway is protein modification; peptidyl-diphthamide biosynthesis. S-adenosyl-L-methionine-dependent methyltransferase that catalyzes the trimethylation of the amino group of the modified target histidine residue in translation elongation factor 2 (EF-2), to form an intermediate called diphthine. The three successive methylation reactions represent the second step of diphthamide biosynthesis. In Thermococcus onnurineus (strain NA1), this protein is Diphthine synthase.